Here is a 282-residue protein sequence, read N- to C-terminus: Putative hydrolase Bamb_4846 (282 aa).

Residues E124, E126, and D155 each coordinate Mg(2+).

The protein belongs to the FAH family. Mg(2+) is required as a cofactor.

This chain is Putative hydrolase Bamb_4846, found in Burkholderia ambifaria (strain ATCC BAA-244 / DSM 16087 / CCUG 44356 / LMG 19182 / AMMD) (Burkholderia cepacia (strain AMMD)).